Consider the following 74-residue polypeptide: U3-agatoxin-Ao1f (74 aa).

A signal peptide spans 1-20 (MRAIISLLLISTMVFGVIEA). The propeptide occupies 21 to 34 (VSLEEGLKIFEGER). 4 disulfide bridges follow: Cys-37–Cys-53, Cys-44–Cys-58, Cys-52–Cys-68, and Cys-60–Cys-66. Asn-72 is modified (asparagine amide).

It belongs to the neurotoxin 07 (Beta/delta-agtx) family. 03 (aga-4) subfamily. Aga sub-subfamily. As to expression, expressed by the venom gland.

It is found in the secreted. In terms of biological role, insecticidal neurotoxin that modulates the insect Nav channel (DmNaV1/tipE (para/tipE)) in a unique manner, with both the activation and inactivation processes being affected. The voltage dependence of activation is shifted toward more hyperpolarized potentials (analogous to site 4 toxins) and a non-inactivating persistent sodium current is induced (site 3-like action). Interestingly, both effects take place in a voltage-dependent manner, producing a bell-shaped curve between -80 and 0 mV. In vivo, induces an irreversible spastic paralysis when injected into insects. This is U3-agatoxin-Ao1f from Agelena orientalis (Funnel-web spider).